A 316-amino-acid polypeptide reads, in one-letter code: Adenine deaminase (316 aa).

Zn(2+) is bound by residues His-14, His-16, and His-194. Catalysis depends on Glu-197, which acts as the Proton donor. Asp-275 contacts Zn(2+). Residue Asp-276 coordinates substrate.

This sequence belongs to the metallo-dependent hydrolases superfamily. Adenosine and AMP deaminases family. Adenine deaminase type 2 subfamily. Requires Zn(2+) as cofactor.

It carries out the reaction adenine + H2O + H(+) = hypoxanthine + NH4(+). In terms of biological role, catalyzes the hydrolytic deamination of adenine to hypoxanthine. Plays an important role in the purine salvage pathway and in nitrogen catabolism. The sequence is that of Adenine deaminase from Pseudomonas paraeruginosa (strain DSM 24068 / PA7) (Pseudomonas aeruginosa (strain PA7)).